We begin with the raw amino-acid sequence, 331 residues long: MRGYLVAIFLSAVFLYYVLHCILWGTNVYWAAPVEMKRRNKIQPCLSKPAFASLLRFHQFHPFLCAADFRKIASLYGSDKFDLPYGMRTSAEYFRLALSKLQSCDLFDEFDNIPCKKCVVVGNGGVLKNKTLGEKIDSYDVIIRMNNGPVLGHEEEVGRRTTFRLFYPESVFSDPIHNDPNTTVILTAFKPHDLRWLLELLMGDKINTNGFWKKPALNLIYKPYQIRILDPFIIRTAAYELLHFPKVFPKNQKPKHPTTGIIAITLAFYICHEVHLAGFKYNFSDLKSPLHYYGNATMSLMNKNAYHNVTAEQLFLKDIIEKNLVINLTQD.

At 1–4 (MRGY) the chain is on the cytoplasmic side. The helical; Signal-anchor for type II membrane protein transmembrane segment at 5-25 (LVAIFLSAVFLYYVLHCILWG) threads the bilayer. Topologically, residues 26 to 331 (TNVYWAAPVE…KNLVINLTQD (306 aa)) are lumenal. N-linked (GlcNAc...) asparagine glycans are attached at residues Asn129, Asn181, Asn282, Asn295, Asn308, and Asn327.

This sequence belongs to the glycosyltransferase 29 family.

It is found in the golgi apparatus membrane. The enzyme catalyses a neolactoside nLc4Cer(d18:1(4E)) + CMP-N-acetyl-beta-neuraminate = a neolactoside IV(3)-alpha-NeuAc-nLc4Cer(d18:1(4E)) + CMP + H(+). It catalyses the reaction a beta-D-galactosyl-(1-&gt;4)-N-acetyl-beta-D-glucosaminyl derivative + CMP-N-acetyl-beta-neuraminate = an N-acetyl-alpha-neuraminyl-(2-&gt;3)-beta-D-galactosyl-(1-&gt;4)-N-acetyl-beta-D-glucosaminyl derivative + CMP + H(+). It carries out the reaction a neolactoside nLc6Cer(d18:1(4E)) + CMP-N-acetyl-beta-neuraminate = a neolactoside VI(3)-alpha-NeuNAc-nLc6Cer(d18:1(4E)) + CMP + H(+). Functionally, transfers the sialyl residue from CMP-N-acetyl-beta-neuraminate to the terminal galactose residue on sugar chains of glycoproteins and glycolipids. It's alpha-2,3-sialyltransferase activity is specific toward type II glycan chains (Galbeta1-4GlcNAc) on glycoproteins and glycolipids such as neolactosides nLc4Cer and nLc6Cer, whose sialyl-products serve as precursors for the Lewis X antigen. Critically involved in the synthesis of functional selectin ligands needed for neutrophil recruitment during inflammation and lymphocyte homing to the lymph nodes. This is Type 2 lactosamine alpha-2,3-sialyltransferase (ST3GAL6) from Pongo abelii (Sumatran orangutan).